A 364-amino-acid polypeptide reads, in one-letter code: tRNA/tmRNA (uracil-C(5))-methyltransferase (364 aa).

S-adenosyl-L-methionine-binding residues include Q188, Y216, N221, E237, and D297. The active-site Nucleophile is C322. The Proton acceptor role is filled by E356.

The protein belongs to the class I-like SAM-binding methyltransferase superfamily. RNA M5U methyltransferase family. TrmA subfamily.

It carries out the reaction uridine(54) in tRNA + S-adenosyl-L-methionine = 5-methyluridine(54) in tRNA + S-adenosyl-L-homocysteine + H(+). The catalysed reaction is uridine(341) in tmRNA + S-adenosyl-L-methionine = 5-methyluridine(341) in tmRNA + S-adenosyl-L-homocysteine + H(+). Its function is as follows. Dual-specificity methyltransferase that catalyzes the formation of 5-methyluridine at position 54 (m5U54) in all tRNAs, and that of position 341 (m5U341) in tmRNA (transfer-mRNA). The protein is tRNA/tmRNA (uracil-C(5))-methyltransferase of Teredinibacter turnerae (strain ATCC 39867 / T7901).